The primary structure comprises 226 residues: Translation initiation factor 6 (226 aa).

It belongs to the eIF-6 family.

Binds to the 50S ribosomal subunit and prevents its association with the 30S ribosomal subunit to form the 70S initiation complex. This is Translation initiation factor 6 from Haloquadratum walsbyi (strain DSM 16790 / HBSQ001).